The primary structure comprises 130 residues: MPKPIKRLSSHKKKRVIFKGIIQIKASFNNTIVTVTNSQGQVITWSSAGACGFKGTKRSTPFAAQIATENAIRTLISQGMKQAEVMISGPGPGRDTALRTIRKSGLVLHFVRDVTPLPHNGCRPPKRRRV.

This sequence belongs to the universal ribosomal protein uS11 family. Part of the 30S ribosomal subunit.

It is found in the plastid. The protein resides in the chloroplast. The protein is Small ribosomal subunit protein uS11c of Psilotum nudum (Whisk fern).